A 98-amino-acid polypeptide reads, in one-letter code: NADH-ubiquinone oxidoreductase chain 4L (98 aa).

3 helical membrane passes run Met-1–Val-21, Ser-28–Ile-48, and Ala-59–Val-79.

The protein belongs to the complex I subunit 4L family. As to quaternary structure, core subunit of respiratory chain NADH dehydrogenase (Complex I) which is composed of 45 different subunits.

Its subcellular location is the mitochondrion inner membrane. The catalysed reaction is a ubiquinone + NADH + 5 H(+)(in) = a ubiquinol + NAD(+) + 4 H(+)(out). Functionally, core subunit of the mitochondrial membrane respiratory chain NADH dehydrogenase (Complex I) which catalyzes electron transfer from NADH through the respiratory chain, using ubiquinone as an electron acceptor. Part of the enzyme membrane arm which is embedded in the lipid bilayer and involved in proton translocation. This chain is NADH-ubiquinone oxidoreductase chain 4L (MT-ND4L), found in Dactylopsila trivirgata (Striped possum).